The following is a 344-amino-acid chain: L-rhamnose-proton symporter (344 aa).

10 consecutive transmembrane segments (helical) span residues 4–24 (AITM…CFYA), 38–58 (WSVG…ALLL), 68–88 (FSLS…IGNI), 101–121 (MGIG…TPII), 137–157 (TLLG…AGQL), 175–195 (LVLA…MNAA), 214–234 (LPSY…FCFI), 259–279 (VLLS…YAWG), 290–310 (ISWM…GLVL), and 323–343 (VLSL…IGMA).

This sequence belongs to the L-rhamnose transporter (TC 2.A.7.6) family.

It localises to the cell inner membrane. The catalysed reaction is L-rhamnopyranose(in) + H(+)(in) = L-rhamnopyranose(out) + H(+)(out). Uptake of L-rhamnose across the cytoplasmic membrane with the concomitant transport of protons into the cell (symport system). The polypeptide is L-rhamnose-proton symporter (Shigella boydii serotype 18 (strain CDC 3083-94 / BS512)).